A 170-amino-acid chain; its full sequence is Methanogen homoaconitase small subunit (170 aa).

Positions 26 to 29 match the YLRT motif; sequence YLRT.

This sequence belongs to the LeuD family. LeuD type 2 subfamily. In terms of assembly, heterotetramer of 2 HacA and 2 HacB proteins.

It carries out the reaction (2R)-homocitrate = (2R,3S)-homoisocitrate. The catalysed reaction is (2R)-homocitrate = cis-homoaconitate + H2O. It catalyses the reaction (2R,3S)-homoisocitrate = cis-homoaconitate + H2O. The enzyme catalyses cis-(homo)2aconitate + H2O = (2R,3S)-iso(homo)2citrate. It carries out the reaction cis-(homo)3aconitate + H2O = (2R,3S)-iso(homo)3citrate. Its pathway is organic acid metabolism; 2-oxosuberate biosynthesis. Component of a hydro-lyase with broad substrate specificity for cis-unsaturated tricarboxylic acids. Catalyzes both the reversible dehydration of (R)-homocitrate ((R)-2-hydroxybutane-1,2,4-tricarboxylate) to produce cis-homoaconitate ((Z)-but-1-ene-1,2,4-tricarboxylate), and its hydration to homoisocitrate ((1R,2S)-1-hydroxybutane-1,2,4-tricarboxylate). Is also able to hydrate the analogous longer chain substrates cis-homo(2)-aconitate, cis-homo(3)-aconitate. These reactions are part of the biosynthesis pathway of coenzyme B. In Methanothermobacter thermautotrophicus (strain ATCC 29096 / DSM 1053 / JCM 10044 / NBRC 100330 / Delta H) (Methanobacterium thermoautotrophicum), this protein is Methanogen homoaconitase small subunit (hacB).